The following is a 748-amino-acid chain: MELQRAQRNLKFLQNEDYVNVTDQTNLNGESQNAYSLGMETQVPEMQFSLSSDDDSIGTQVKSVTAQKSPMTQETTKNDTERNKDVDKSCNPVSTSHPDLGGSNIEENIFINTQIQSRLDDAEEETNLKLKLEKFKYSFKSSNADDTHSNANVTAKRRPAIRKANSKLKTKPKTKRDPKIIKNITDFNINNYERSRTASLLKQLSGKHKKVLDIIKTQNEGNSDKPPRARNNKGEKATFDTYSEQEWKDIMKLLLQKFPQSEETDLNEVQKFLYGSEKSSNSLDNQESSQQRLWTASQLPPELPDEAIQPEQEERIRDTQSAVNFLSLSQVMDDKSEIMKDEESIIISRGDSTSSQEYGNGLEPQQPVGNVVGEDIELAVGTRINAFSLTDYKACKPMSVEVSRRCENSTDNDYDNISIVSDTTDETSTLFPLDQYRYVFIENDERPPLATDTIGSTQFFTPNTSPLDGIIDLTQESFKAVRSLISPLKVENNKTGVTSQASNQVQVPATRTPTIIPQKNLTTTLKTEEEKNNIGSSIRVKLLQESVVKLNPKLVKHNFYRVEANDSEEEETEFDDQFCIADIQLVDSSKISTKDSTQNPTTSNDIIDTSAASSIASPEKFCEIMMSQSMKELRQSLKTVGLKPMRTKVEIIQSLQTASQILSTANPDNKGEHGGVANFSKIEIFDHLTELIEAFPDFLERIYTFEPIPLNELIEKLFSAEPFVSQIDEMTIREWADVQGICLRNDKK.

Residues Lys-62 to Thr-75 are compositionally biased toward polar residues. A disordered region spans residues Lys-62–Asn-104. Thr-72 bears the Phosphothreonine; by ATR and ATM mark. Over residues Thr-76–Lys-88 the composition is skewed to basic and acidic residues. Thr-113 is subject to Phosphothreonine; by ATR and ATM. Disordered regions lie at residues Ile-215–Lys-236 and Glu-277–Leu-303. Positions Asn-222–Lys-236 are enriched in basic and acidic residues. Residues Glu-277–Gln-298 show a composition bias toward polar residues. Ser-289 bears the Phosphoserine; by ATR and ATM mark. Thr-319 carries the post-translational modification Phosphothreonine; by ATR and ATM. Ser-329 and Ser-355 each carry phosphoserine; by ATR and ATM. A compositionally biased stretch (polar residues) spans Ile-591–Thr-602. The disordered stretch occupies residues Ile-591–Ser-610.

It belongs to the SLX4 family. In terms of assembly, forms a heterodimer with SLX1. Interacts with RAD1; catalytic subunit of the RAD1-RAD10 endonuclease. Interacts with RTT107. Phosphorylated by ATR (MEC1) and ATM (TEL1) upon DNA damage. This appears to be required for the function with the RAD1-RAD10 endonuclease.

The protein resides in the nucleus. Its subcellular location is the cytoplasm. Its function is as follows. Regulatory subunit that interacts with and increases the activity of different structure-specific endonucleases. Has several distinct roles in protecting genome stability by resolving diverse forms of deleterious DNA structures. Component of the SLX1-SLX4 structure-specific endonuclease that resolves DNA secondary structures generated during DNA repair and recombination. Has endonuclease activity towards branched DNA substrates, introducing single-strand cuts in duplex DNA close to junctions with ss-DNA. Has a preference for simple Y, 5'-flap and replication fork-like structures. It cleaves the strand bearing the 5'-non-homologous arm at the branch site junction and generates ligatable, nicked products from the 5'-flap or replication fork substrates. Plays a critical role in maintaining the integrity of the ribosomal DNA (rDNA) loci, where it has a role in re-starting stalled replication forks. Has Holliday junction resolvase activity in vitro. Interacts with the structure-specific RAD1-RAD10 endonuclease and promotes RAD1-RAD10-dependent 3'-non-homologous tail removal (NHTR) during repair of double-strand breaks by single-strand annealing. SLX4 also promotes recovery from DNA-alkylation-induced replisome stalling during DNA replication by facilitating the error-free mode of lesion bypass. This does not require SLX1 or RAD1-RAD10, but probably RTT107. This is Structure-specific endonuclease subunit SLX4 from Saccharomyces cerevisiae (strain RM11-1a) (Baker's yeast).